Here is a 139-residue protein sequence, read N- to C-terminus: Large ribosomal subunit protein uL16 (139 aa).

Belongs to the universal ribosomal protein uL16 family. As to quaternary structure, part of the 50S ribosomal subunit.

In terms of biological role, binds 23S rRNA and is also seen to make contacts with the A and possibly P site tRNAs. In Treponema pallidum (strain Nichols), this protein is Large ribosomal subunit protein uL16.